Consider the following 78-residue polypeptide: MAAHCQVTGAEPGFGHSISHSHRRNKRRFDPNIQKKRYWVPSLRRNVTLQVSARGIKTIDVRGIDVVVAAILARGVKL.

Positions 1–31 (MAAHCQVTGAEPGFGHSISHSHRRNKRRFDP) are disordered.

This sequence belongs to the bacterial ribosomal protein bL28 family.

The polypeptide is Large ribosomal subunit protein bL28 (Arthrobacter sp. (strain FB24)).